The following is a 258-amino-acid chain: Tryptophan synthase alpha chain (258 aa).

Active-site proton acceptor residues include Glu-47 and Asp-58.

This sequence belongs to the TrpA family. In terms of assembly, tetramer of two alpha and two beta chains.

The enzyme catalyses (1S,2R)-1-C-(indol-3-yl)glycerol 3-phosphate + L-serine = D-glyceraldehyde 3-phosphate + L-tryptophan + H2O. The protein operates within amino-acid biosynthesis; L-tryptophan biosynthesis; L-tryptophan from chorismate: step 5/5. In terms of biological role, the alpha subunit is responsible for the aldol cleavage of indoleglycerol phosphate to indole and glyceraldehyde 3-phosphate. This Bacillus thuringiensis subsp. konkukian (strain 97-27) protein is Tryptophan synthase alpha chain.